The following is a 422-amino-acid chain: Putative polyketide beta-ketoacyl synthase 1 (422 aa).

A Ketosynthase family 3 (KS3) domain is found at 2–416; it reads TRRVAVTGIG…GFQSAVLLTG (415 aa). Catalysis depends on for beta-ketoacyl synthase activity residues Cys-169, His-309, and His-346.

It belongs to the thiolase-like superfamily. Beta-ketoacyl-ACP synthases family.

It participates in antibiotic biosynthesis; curamycin biosynthesis. In Streptomyces cyaneus (Streptomyces curacoi), this protein is Putative polyketide beta-ketoacyl synthase 1 (curA).